A 1024-amino-acid chain; its full sequence is Protein translocase subunit SecA (1024 aa).

Residues Gln143, 161–165 (GEGKT), and Asp661 contribute to the ATP site. The interval 970–1024 (HEEAGSVYNAQPDGEPESQASKQQPVVADHSKPGRNDLCPCGSGKKYKNCHGREA) is disordered. Cys1008, Cys1010, Cys1019, and His1020 together coordinate Zn(2+). Basic residues predominate over residues 1014 to 1024 (KKYKNCHGREA).

It belongs to the SecA family. As to quaternary structure, monomer and homodimer. Part of the essential Sec protein translocation apparatus which comprises SecA, SecYEG and auxiliary proteins SecDF. Other proteins may also be involved. Zn(2+) is required as a cofactor.

The protein resides in the cell inner membrane. Its subcellular location is the cytoplasm. It carries out the reaction ATP + H2O + cellular proteinSide 1 = ADP + phosphate + cellular proteinSide 2.. Its function is as follows. Part of the Sec protein translocase complex. Interacts with the SecYEG preprotein conducting channel. Has a central role in coupling the hydrolysis of ATP to the transfer of proteins into and across the cell membrane, serving as an ATP-driven molecular motor driving the stepwise translocation of polypeptide chains across the membrane. This Chlorobium luteolum (strain DSM 273 / BCRC 81028 / 2530) (Pelodictyon luteolum) protein is Protein translocase subunit SecA.